The sequence spans 476 residues: tRNA-2-methylthio-N(6)-dimethylallyladenosine synthase (476 aa).

The segment covering 1–14 (MTEVVHLHMPEEAR) has biased composition (basic and acidic residues). The disordered stretch occupies residues 1–20 (MTEVVHLHMPEEARATQSRD). An MTTase N-terminal domain is found at 26–147 (RRYYVWTVGC…APNPIYQLEE (122 aa)). Residues C35, C71, C105, C170, C174, and C177 each contribute to the [4Fe-4S] cluster site. A Radical SAM core domain is found at 156–390 (DHPPVSVHVP…ERLQEQIAAE (235 aa)). The TRAM domain maps to 393 to 453 (ARFLHQTVEV…PWSLQGVLAR (61 aa)).

This sequence belongs to the methylthiotransferase family. MiaB subfamily. Monomer. [4Fe-4S] cluster is required as a cofactor.

The protein localises to the cytoplasm. It catalyses the reaction N(6)-dimethylallyladenosine(37) in tRNA + (sulfur carrier)-SH + AH2 + 2 S-adenosyl-L-methionine = 2-methylsulfanyl-N(6)-dimethylallyladenosine(37) in tRNA + (sulfur carrier)-H + 5'-deoxyadenosine + L-methionine + A + S-adenosyl-L-homocysteine + 2 H(+). Catalyzes the methylthiolation of N6-(dimethylallyl)adenosine (i(6)A), leading to the formation of 2-methylthio-N6-(dimethylallyl)adenosine (ms(2)i(6)A) at position 37 in tRNAs that read codons beginning with uridine. The protein is tRNA-2-methylthio-N(6)-dimethylallyladenosine synthase of Roseiflexus sp. (strain RS-1).